An 877-amino-acid chain; its full sequence is Phosphoenolpyruvate carboxylase (877 aa).

Catalysis depends on residues H138 and K544.

The protein belongs to the PEPCase type 1 family. Mg(2+) is required as a cofactor.

It carries out the reaction oxaloacetate + phosphate = phosphoenolpyruvate + hydrogencarbonate. Its function is as follows. Forms oxaloacetate, a four-carbon dicarboxylic acid source for the tricarboxylic acid cycle. The sequence is that of Phosphoenolpyruvate carboxylase from Vibrio parahaemolyticus serotype O3:K6 (strain RIMD 2210633).